The chain runs to 245 residues: Probable 2-phosphosulfolactate phosphatase (245 aa).

The protein belongs to the ComB family. Mg(2+) serves as cofactor.

It carries out the reaction (2R)-O-phospho-3-sulfolactate + H2O = (2R)-3-sulfolactate + phosphate. The sequence is that of Probable 2-phosphosulfolactate phosphatase from Synechococcus sp. (strain RCC307).